A 101-amino-acid polypeptide reads, in one-letter code: uncharacterized protein (101 aa).

A helical membrane pass occupies residues 70 to 90 (VLFIPIILLLPPSCPLTGVTV).

It localises to the membrane. This is an uncharacterized protein from Saccharomyces cerevisiae (strain ATCC 204508 / S288c) (Baker's yeast).